Reading from the N-terminus, the 465-residue chain is Ran-binding protein 3-like (465 aa).

In terms of domain architecture, RanBD1 spans 276–417 (SQPSRKCLLE…ALQSFNKQRD (142 aa)).

In terms of assembly, interacts with SMAD1, SMAD5 and SMAD8; the interaction (with SMAD at least) increases when SMAD1 is not phosphorylated and mediates SMAD1 nuclear export.

It localises to the nucleus. Its subcellular location is the cytoplasm. Nuclear export factor for BMP-specific SMAD1/5/8 that plays a critical role in terminating BMP signaling and regulating mesenchymal stem cell differentiation by blocking osteoblast differentiation to promote myogenic differention. Directly recognizes dephosphorylated SMAD1/5/8 and mediates their nuclear export in a Ran-dependent manner. This chain is Ran-binding protein 3-like (RANBP3L), found in Homo sapiens (Human).